A 312-amino-acid chain; its full sequence is MGLKRKKISVIGSGFTGATTALMVAQKELGDVVLVDIPDMEDPTKGKALDMAEAAPVQGFDAKITGTSNYADTEGSDLVIITAGIARKPGMSRDDLVNTNANIMKSVTKEIVHYSPNTTIVVLTNPVDAMTYTVFKESGLPKERVIGQSGILDTARFRTFVAEELNLSVKDVTGFVLGGHGDDMVPLIRYSYAGGIPLEKLIPQERLDAIVQRTRTGGGEIVNLLGNGSAYYAPAASLTVMAEAILKDQRRVLPTIAYLEGEYGYQDIYLGVPTILGGEGIEEIIELDLTKEEKAQLDKSADSVKNVLNVLQ.

NAD(+) contacts are provided by residues 12–17 (GSGFTG) and Asp36. Substrate contacts are provided by Arg87 and Arg93. NAD(+)-binding positions include Asn100 and 123–125 (LTN). Substrate is bound at residue Asn125. At Ser149 the chain carries Phosphoserine. A substrate-binding site is contributed by Arg156. Catalysis depends on His180, which acts as the Proton acceptor.

This sequence belongs to the LDH/MDH superfamily. MDH type 3 family.

The catalysed reaction is (S)-malate + NAD(+) = oxaloacetate + NADH + H(+). Catalyzes the reversible oxidation of malate to oxaloacetate. This Oceanobacillus iheyensis (strain DSM 14371 / CIP 107618 / JCM 11309 / KCTC 3954 / HTE831) protein is Malate dehydrogenase.